The following is a 214-amino-acid chain: Thymidylate kinase (214 aa).

An ATP-binding site is contributed by 10–17 (GPDGAGKT).

Belongs to the thymidylate kinase family.

The catalysed reaction is dTMP + ATP = dTDP + ADP. Phosphorylation of dTMP to form dTDP in both de novo and salvage pathways of dTTP synthesis. The chain is Thymidylate kinase from Levilactobacillus brevis (strain ATCC 367 / BCRC 12310 / CIP 105137 / JCM 1170 / LMG 11437 / NCIMB 947 / NCTC 947) (Lactobacillus brevis).